A 405-amino-acid chain; its full sequence is BRCA1-A complex subunit Abraxas 1 (405 aa).

Residues 7-154 (LGVLSGFVLG…CTHCLEHGLY (148 aa)) form the MPN domain. At Ser48 the chain carries Phosphoserine. Residues 208–262 (SLKEVRKINEMYAAIQEELKTICQKVEQSEREVEKLLMDVNRLKEVRKKQQAQAK) adopt a coiled-coil conformation. Residues 333-405 (ASPAPAAPLS…DTDYPRSPTF (73 aa)) form a disordered region. Ser382, Ser383, Ser392, and Ser402 each carry phosphoserine. Positions 386–397 (IDTEVGSPEDDT) are enriched in acidic residues. Positions 402-405 (SPTF) match the pSXXF motif motif.

This sequence belongs to the FAM175 family. Abraxas subfamily. In terms of assembly, component of the ARISC complex, at least composed of UIMC1/RAP80, ABRAXAS1, BRCC3/BRCC36, BABAM2 and BABAM1/NBA1. Component of the BRCA1-A complex, at least composed of the BRCA1, BARD1, UIMC1/RAP80, ABRAXAS1, BRCC3/BRCC36, BABAM2 and BABAM1/NBA1. In the complex, interacts directly with UIMC1/RAP80, BRCC3/BRCC36 and BABAM2. Homodimer. Interacts directly (when phosphorylated at Ser-402) with BRCA1. The phosphorylated homodimer can interact directly with two BRCA1 chains, giving rise to a heterotetramer. Binds polyubiquitin. Post-translationally, phosphorylation of Ser-402 of the pSXXF motif by ATM or ATR constitutes a specific recognition motif for the BRCT domain of BRCA1.

It is found in the nucleus. Involved in DNA damage response and double-strand break (DSB) repair. Component of the BRCA1-A complex, acting as a central scaffold protein that assembles the various components of the complex and mediates the recruitment of BRCA1. The BRCA1-A complex specifically recognizes 'Lys-63'-linked ubiquitinated histones H2A and H2AX at DNA lesion sites, leading to target the BRCA1-BARD1 heterodimer to sites of DNA damage at DSBs. This complex also possesses deubiquitinase activity that specifically removes 'Lys-63'-linked ubiquitin on histones H2A and H2AX. In Rattus norvegicus (Rat), this protein is BRCA1-A complex subunit Abraxas 1.